The sequence spans 234 residues: MAQRSQKSPPPPELAADKAAALRLTPVSRETEARLDAYVALLLQWQAKTNLISPATLPQLWTRHVADSLQLLRLAPDAKTWLDFGSGGGFPGVVLACALAESAGGSVQLVERNVKKAAFLREALRVTGGAGQVILADIGDSVDRFAGQVDCVTARAVAPLHQLIGFAKPLIRQGAKALFLKGQDVDAELTEATKSWKFSPRLHPSLTGGQGWIVELGAVEPQDQSAPTPHGASV.

Glycine 85, phenylalanine 90, and arginine 155 together coordinate S-adenosyl-L-methionine.

Belongs to the methyltransferase superfamily. RNA methyltransferase RsmG family.

It localises to the cytoplasm. It carries out the reaction guanosine(527) in 16S rRNA + S-adenosyl-L-methionine = N(7)-methylguanosine(527) in 16S rRNA + S-adenosyl-L-homocysteine. In terms of biological role, specifically methylates the N7 position of guanine in position 527 of 16S rRNA. This chain is Ribosomal RNA small subunit methyltransferase G, found in Rhodopseudomonas palustris (strain BisB18).